The chain runs to 202 residues: GTP cyclohydrolase-2 (202 aa).

48–52 (RLHSE) contacts GTP. Cysteine 53, cysteine 64, and cysteine 66 together coordinate Zn(2+). GTP is bound by residues glutamine 69, 91 to 93 (EGR), and threonine 113. The active-site Proton acceptor is aspartate 125. Arginine 127 (nucleophile) is an active-site residue. Residues threonine 148 and lysine 153 each coordinate GTP.

The protein belongs to the GTP cyclohydrolase II family. Requires Zn(2+) as cofactor.

It carries out the reaction GTP + 4 H2O = 2,5-diamino-6-hydroxy-4-(5-phosphoribosylamino)-pyrimidine + formate + 2 phosphate + 3 H(+). It participates in cofactor biosynthesis; riboflavin biosynthesis; 5-amino-6-(D-ribitylamino)uracil from GTP: step 1/4. Catalyzes the conversion of GTP to 2,5-diamino-6-ribosylamino-4(3H)-pyrimidinone 5'-phosphate (DARP), formate and pyrophosphate. The protein is GTP cyclohydrolase-2 of Colwellia psychrerythraea (strain 34H / ATCC BAA-681) (Vibrio psychroerythus).